A 154-amino-acid polypeptide reads, in one-letter code: MSLVRNSSRLLRSQLKRVQSVPVALYHENVVEHYENPRNVGSLDKKDVTVGTGLVGAPACGDVMKLQIKVDENGKIVDAKFKTFGCGSAIASSSLATEWVKGKSIDEAGKLKNTDIAKELRLPPVKLHCSMLAEDAIKAALADYKVKQQKKVAN.

The protein belongs to the NifU family. Component of the mitochondrial core iron-sulfur cluster (ISC) assembly complex at least composed of the cystein desulfurase Nfs1, the scaffold protein IscU, the accessory protein bcn92/Isd11/Lyrm4, and probably fh/frataxin. Interacts with Nfs1. Requires Fe(2+) as cofactor. [2Fe-2S] cluster is required as a cofactor.

Its pathway is cofactor biosynthesis; iron-sulfur cluster biosynthesis. Functionally, scaffold protein for the de novo synthesis of iron-sulfur (Fe-S) clusters within mitochondria, which is required for maturation of both mitochondrial and cytoplasmic [2Fe-2S] and [4Fe-4S] proteins. Component of the mitochondrial core iron-sulfur cluster (ISC) assembly complex; regulates its activity. The sequence is that of Iron-sulfur cluster assembly enzyme IscU from Drosophila melanogaster (Fruit fly).